The sequence spans 581 residues: Sulfate adenylyltransferase (581 aa).

An N-terminal region spans residues 1-176 (MANAPHGGVL…VQAIQAPTHF (176 aa)). Residues 177-401 (DYVPLRFTPA…LRESYPPRPQ (225 aa)) form a catalytic region. Sulfate is bound at residue Q204. ATP contacts are provided by residues 204 to 207 (QTRN) and 298 to 301 (GRDH). Active-site residues include T205, R206, and N207. R206 is a sulfate binding site. A302 is a sulfate binding site. M340 is an ATP binding site. An allosteric regulation domain; adenylyl-sulfate kinase-like region spans residues 402-581 (QGFTILLTGL…IMILESQNLV (180 aa)). 3'-phosphoadenylyl sulfate-binding positions include 441–444 (EELR), 486–487 (TA), and R526.

This sequence in the N-terminal section; belongs to the sulfate adenylyltransferase family. It in the C-terminal section; belongs to the APS kinase family. As to quaternary structure, homohexamer. Dimer of trimers.

The protein localises to the cytoplasm. It catalyses the reaction sulfate + ATP + H(+) = adenosine 5'-phosphosulfate + diphosphate. The protein operates within sulfur metabolism; hydrogen sulfide biosynthesis; sulfite from sulfate: step 1/3. Allosterically inhibited by 3'-phosphoadenosine 5'-phosphosulfate (PAPS). Functionally, catalyzes the first intracellular reaction of sulfate assimilation, forming adenosine-5'-phosphosulfate (APS) from inorganic sulfate and ATP. Plays an important role in sulfate activation as a component of the biosynthesis pathway of sulfur-containing amino acids. This chain is Sulfate adenylyltransferase, found in Cryptococcus neoformans var. neoformans serotype D (strain B-3501A) (Filobasidiella neoformans).